A 566-amino-acid polypeptide reads, in one-letter code: Proline--tRNA ligase 1 (566 aa).

It belongs to the class-II aminoacyl-tRNA synthetase family. ProS type 1 subfamily. As to quaternary structure, homodimer.

The protein resides in the cytoplasm. The enzyme catalyses tRNA(Pro) + L-proline + ATP = L-prolyl-tRNA(Pro) + AMP + diphosphate. Functionally, catalyzes the attachment of proline to tRNA(Pro) in a two-step reaction: proline is first activated by ATP to form Pro-AMP and then transferred to the acceptor end of tRNA(Pro). As ProRS can inadvertently accommodate and process non-cognate amino acids such as alanine and cysteine, to avoid such errors it has two additional distinct editing activities against alanine. One activity is designated as 'pretransfer' editing and involves the tRNA(Pro)-independent hydrolysis of activated Ala-AMP. The other activity is designated 'posttransfer' editing and involves deacylation of mischarged Ala-tRNA(Pro). The misacylated Cys-tRNA(Pro) is not edited by ProRS. In Bacillus cereus (strain ATCC 14579 / DSM 31 / CCUG 7414 / JCM 2152 / NBRC 15305 / NCIMB 9373 / NCTC 2599 / NRRL B-3711), this protein is Proline--tRNA ligase 1.